The sequence spans 231 residues: uncharacterized protein (231 aa).

This is an uncharacterized protein from Methanocaldococcus jannaschii (strain ATCC 43067 / DSM 2661 / JAL-1 / JCM 10045 / NBRC 100440) (Methanococcus jannaschii).